The sequence spans 235 residues: (5-formylfuran-3-yl)methyl phosphate synthase (235 aa).

K27 serves as the catalytic Schiff-base intermediate with substrate. K85 acts as the Proton acceptor in catalysis.

Belongs to the MfnB family.

It carries out the reaction 2 D-glyceraldehyde 3-phosphate = 4-(hydroxymethyl)-2-furancarboxaldehyde phosphate + phosphate + 2 H2O. Its pathway is cofactor biosynthesis; methanofuran biosynthesis. Its function is as follows. Catalyzes the formation of 4-(hydroxymethyl)-2-furancarboxaldehyde phosphate (4-HFC-P) from two molecules of glyceraldehyde-3-P (GA-3-P). The protein is (5-formylfuran-3-yl)methyl phosphate synthase of Methanococcus aeolicus (strain ATCC BAA-1280 / DSM 17508 / OCM 812 / Nankai-3).